Consider the following 433-residue polypeptide: Glutamate-1-semialdehyde 2,1-aminomutase (433 aa).

K271 carries the N6-(pyridoxal phosphate)lysine modification.

Belongs to the class-III pyridoxal-phosphate-dependent aminotransferase family. HemL subfamily. Homodimer. It depends on pyridoxal 5'-phosphate as a cofactor.

The protein resides in the cytoplasm. It catalyses the reaction (S)-4-amino-5-oxopentanoate = 5-aminolevulinate. Its pathway is porphyrin-containing compound metabolism; protoporphyrin-IX biosynthesis; 5-aminolevulinate from L-glutamyl-tRNA(Glu): step 2/2. It functions in the pathway porphyrin-containing compound metabolism; chlorophyll biosynthesis. This is Glutamate-1-semialdehyde 2,1-aminomutase from Prochlorococcus marinus subsp. pastoris (strain CCMP1986 / NIES-2087 / MED4).